A 267-amino-acid polypeptide reads, in one-letter code: Hydrolase FUB4 (267 aa).

Residues S93, D183, and H243 each act as charge relay system in the active site.

The protein belongs to the AB hydrolase 3 family.

Its pathway is mycotoxin biosynthesis. Functionally, hydrolase; part of the gene cluster that mediates the biosynthesis of fusaric acid, a mycotoxin with low to moderate toxicity to animals and humans, but with high phytotoxic properties. L-aspartate is suggested as fusaric acid amino acid precursor that is activated and further processed to O-acetyl-L-homoserine by cluster enzymes aspartate kinase FUB3 and homoserine O-acetyltransferase FUB5, as well as enzymes of the primary metabolism. The polyketide synthase (PKS) FUB1 generates the triketide trans-2-hexenal which is presumptively released by the hydrolase FUB4 and linked to the NRPS-bound amino acid precursor by NAD(P)-dependent dehydrogenase FUB6. FUB1, FUB4, and the non-canonical NRPS Fub8 may form an enzyme complex. Further processing of the NRPS-bound intermediate might be carried out by FUB6 and the sulfhydrylase FUB7, enabling a spontaneous electrocyclization to close the carbon backbone of fusaric acid. Dihydrofusaric acid is likely to be released via reduction by the thioester reductase (TR) domain of FUB8 whereupon the final oxidation to fusaric acid may (also) be performed by the FMN-dependent dehydrogenase FUB9. The sequence is that of Hydrolase FUB4 from Gibberella moniliformis (strain M3125 / FGSC 7600) (Maize ear and stalk rot fungus).